A 413-amino-acid polypeptide reads, in one-letter code: F-box/kelch-repeat protein At5g26960 (413 aa).

One can recognise an F-box domain in the interval Ser-41–Leu-90. Kelch repeat units follow at residues Ser-96–Leu-141, Arg-152–Gly-191, Lys-192–Gly-238, Phe-240–Gly-295, and Leu-367–Trp-413.

In Arabidopsis thaliana (Mouse-ear cress), this protein is F-box/kelch-repeat protein At5g26960.